A 441-amino-acid chain; its full sequence is tRNA pseudouridine synthase Pus10 (441 aa).

Catalysis depends on Asp-268, which acts as the Nucleophile. Substrate-binding residues include Tyr-333 and Tyr-405.

Belongs to the pseudouridine synthase Pus10 family.

The enzyme catalyses uridine(54) in tRNA = pseudouridine(54) in tRNA. The catalysed reaction is uridine(55) in tRNA = pseudouridine(55) in tRNA. In terms of biological role, responsible for synthesis of pseudouridine from uracil-54 and uracil-55 in the psi GC loop of transfer RNAs. The polypeptide is tRNA pseudouridine synthase Pus10 (Thermosphaera aggregans (strain DSM 11486 / M11TL)).